The sequence spans 166 residues: NAD(P)H-quinone oxidoreductase subunit I, chloroplastic (166 aa).

2 consecutive 4Fe-4S ferredoxin-type domains span residues 55-84 (GRIHFEFDKCIACEVCVRVCPIDLPVVDWK) and 95-124 (LNYSIDFGICIFCGNCVEYCPTNCLSMTEE). [4Fe-4S] cluster contacts are provided by cysteine 64, cysteine 67, cysteine 70, cysteine 74, cysteine 104, cysteine 107, cysteine 110, and cysteine 114.

The protein belongs to the complex I 23 kDa subunit family. In terms of assembly, NDH is composed of at least 16 different subunits, 5 of which are encoded in the nucleus. Requires [4Fe-4S] cluster as cofactor.

The protein localises to the plastid. It localises to the chloroplast thylakoid membrane. The catalysed reaction is a plastoquinone + NADH + (n+1) H(+)(in) = a plastoquinol + NAD(+) + n H(+)(out). It catalyses the reaction a plastoquinone + NADPH + (n+1) H(+)(in) = a plastoquinol + NADP(+) + n H(+)(out). Its function is as follows. NDH shuttles electrons from NAD(P)H:plastoquinone, via FMN and iron-sulfur (Fe-S) centers, to quinones in the photosynthetic chain and possibly in a chloroplast respiratory chain. The immediate electron acceptor for the enzyme in this species is believed to be plastoquinone. Couples the redox reaction to proton translocation, and thus conserves the redox energy in a proton gradient. In Bahiopsis tomentosa (Tecote), this protein is NAD(P)H-quinone oxidoreductase subunit I, chloroplastic.